The primary structure comprises 434 residues: Serine--tRNA ligase (434 aa).

An L-serine-binding site is contributed by 230 to 232; the sequence is TSE. ATP is bound by residues 261–263 and V277; that span reads RRE. E284 is an L-serine binding site. 348 to 351 contacts ATP; sequence ELTS. T393 lines the L-serine pocket.

This sequence belongs to the class-II aminoacyl-tRNA synthetase family. Type-1 seryl-tRNA synthetase subfamily. As to quaternary structure, homodimer. The tRNA molecule binds across the dimer.

It localises to the cytoplasm. The catalysed reaction is tRNA(Ser) + L-serine + ATP = L-seryl-tRNA(Ser) + AMP + diphosphate + H(+). It catalyses the reaction tRNA(Sec) + L-serine + ATP = L-seryl-tRNA(Sec) + AMP + diphosphate + H(+). It participates in aminoacyl-tRNA biosynthesis; selenocysteinyl-tRNA(Sec) biosynthesis; L-seryl-tRNA(Sec) from L-serine and tRNA(Sec): step 1/1. Catalyzes the attachment of serine to tRNA(Ser). Is also able to aminoacylate tRNA(Sec) with serine, to form the misacylated tRNA L-seryl-tRNA(Sec), which will be further converted into selenocysteinyl-tRNA(Sec). The polypeptide is Serine--tRNA ligase (Kocuria rhizophila (strain ATCC 9341 / DSM 348 / NBRC 103217 / DC2201)).